The primary structure comprises 299 residues: Taste receptor type 2 member 50 (299 aa).

Met-1 is a topological domain (extracellular). A helical transmembrane segment spans residues 2–22 (ITFLYIFFSILIMVLFVLGNF). The Cytoplasmic segment spans residues 23 to 55 (ANGFIALVNFIDWVKRKKISSADQILTALAVSR). Residues 56 to 76 (IGLLWTLLLNWYLTVLNPAFY) form a helical membrane-spanning segment. At 77 to 87 (SVELRITSYNA) the chain is on the extracellular side. Residues 88-108 (WVVTNHFSMWLAASLSIFYLL) form a helical membrane-spanning segment. At 109-126 (KIANFSNLIFLHLKRRVR) the chain is on the cytoplasmic side. The chain crosses the membrane as a helical span at residues 127–147 (SVILVILLGTLIFLVCHLLVA). At 148-181 (NMDESMWAEEYEGNITGKMKLRNTVHLSYLTVTT) the chain is on the extracellular side. The N-linked (GlcNAc...) asparagine glycan is linked to Asn-161. Residues 182-202 (LWSFIPFTLSLISFLMLICSL) traverse the membrane as a helical segment. The Cytoplasmic portion of the chain corresponds to 203 to 229 (CKHLKKMQLHGEGSQDLSTKVHIKALQ). A helical membrane pass occupies residues 230 to 250 (TLISFLLLCAIFFLFLIISVW). Topologically, residues 251–259 (SPRRLRNDP) are extracellular. A helical membrane pass occupies residues 260–280 (VVMVSKAVGNIYLAFDSFILI). Topologically, residues 281 to 299 (WRTKKLKHTFLLILCQIRC) are cytoplasmic.

Belongs to the G-protein coupled receptor T2R family.

The protein resides in the membrane. Its function is as follows. Receptor that may play a role in the perception of bitterness and is gustducin-linked. May play a role in sensing the chemical composition of the gastrointestinal content. The activity of this receptor may stimulate alpha gustducin, mediate PLC-beta-2 activation and lead to the gating of TRPM5. In Pan paniscus (Pygmy chimpanzee), this protein is Taste receptor type 2 member 50 (TAS2R50).